Here is a 315-residue protein sequence, read N- to C-terminus: MMMMSSLGGGGGGGGGSGGGIGGGGGGRFMTYSSSLSVPPSAPQSPNYSGGLRSQSSVFVEQEKYLSELLAERHKLTPFLPVLPHAFRLLNQEILRVTTLLENATVLSQSGLDHPSPLASGGIFQNARADMNGWASQFPSERSVPSSPGPNWLNSPGSSSGLIAKRTIRVDIPVDNYPNFNFVGRLLGPRGNSLKRVEASTDCRVLIRGRGSIKDPIKEEMMRGKPGYEHLNEPLHILVEAELPIEIVDARLMQAREILDDLLTPMEETHDMYKKQQLRELALLNGTLREEGSPMSGSVSPYNSLGMKRAKTREG.

Disordered stretches follow at residues 1–53 (MMMM…GGLR) and 136–158 (SQFP…SPGS). The span at 7-28 (LGGGGGGGGGSGGGIGGGGGGR) shows a compositional bias: gly residues. 2 stretches are compositionally biased toward polar residues: residues 31–53 (TYSS…GGLR) and 136–146 (SQFPSERSVPS). A KH domain is found at 171–238 (DIPVDNYPNF…EHLNEPLHIL (68 aa)). A disordered region spans residues 289–315 (REEGSPMSGSVSPYNSLGMKRAKTREG). Serine 300 carries the post-translational modification Phosphoserine.

Its subcellular location is the nucleus. The protein is KH domain-containing protein At5g56140 of Arabidopsis thaliana (Mouse-ear cress).